We begin with the raw amino-acid sequence, 467 residues long: Thiohydroximate-O-sulfate sulfur/sulfate-lyase (nitrile-forming) NSP3 (467 aa).

A Jacalin-type lectin domain is found at 2 to 143 (AQKLVAQGGE…LHSLGAYVSL (142 aa)). Kelch repeat units lie at residues 177–225 (KIYS…VRMV), 230–276 (TLYT…SMAA), 280–329 (NVYV…VVQG), 331–375 (VWIV…ASAA), and 379–434 (HIVI…ASTT). Catalysis depends on Arg237, which acts as the Proton donor. Positions 237, 270, 292, 321, and 370 each coordinate a (Z)-N-(sulfonatooxy)alkanimidothioate. Arg292 acts as the Proton donor in catalysis. Residues Glu386, Asp390, and His394 each coordinate Fe(2+). Trp429 provides a ligand contact to a (Z)-N-(sulfonatooxy)alkanimidothioate.

Belongs to the jacalin lectin family. Fe(2+) serves as cofactor. Mainly expressed in roots, and, at low levels, in seedlings and leaves. Observed in seeds.

It carries out the reaction a (Z)-N-(sulfonatooxy)alkanimidothioate = a nitrile + sulfur + sulfate. It catalyses the reaction (Z)-phenyl-N-(sulfonatooxy)methanimidothioate = phenylacetonitrile + sulfur + sulfate. The catalysed reaction is (Z)-N-(sulfonatooxy)prop-2-enimidothioate = but-3-enenitrile + sulfur + sulfate. Its function is as follows. Specifier protein responsible for constitutive and herbivore-induced simple nitrile formation, especially in roots. Promotes simple nitriles, but not epithionitrile or thiocyanate formation. Converts allylglucosinolate and benzylglucosinolate (glucotropaeolin) to their corresponding simple nitriles in the presence of myrosinase. In Arabidopsis thaliana (Mouse-ear cress), this protein is Thiohydroximate-O-sulfate sulfur/sulfate-lyase (nitrile-forming) NSP3.